A 201-amino-acid chain; its full sequence is Putative 3-methyladenine DNA glycosylase (201 aa).

Belongs to the DNA glycosylase MPG family.

The chain is Putative 3-methyladenine DNA glycosylase from Trichodesmium erythraeum (strain IMS101).